The following is a 978-amino-acid chain: Copper-transporting ATPase HMA4 (978 aa).

The segment covering 1–11 has biased composition (basic and acidic residues); sequence MEQNGENHLKD. A disordered region spans residues 1–35; that stretch reads MEQNGENHLKDPLLQADGGGSGASPAGASPRKERK. 3 consecutive HMA domains span residues 37 to 103, 111 to 177, and 186 to 252; these read RKVM…FEVD, AVCR…FGAD, and NKVH…QPPK. Cu(+) is bound by residues Cys-48, Cys-51, Cys-122, and Cys-125. The next 8 membrane-spanning stretches (helical) occupy residues 280–300, 315–335, 352–372, 385–405, 545–565, 584–604, 907–927, and 935–955; these read FLWS…LPMI, MTIG…IIGW, MDVL…YIVL, FFET…LEVV, FFVP…FVAG, LALQ…LGLA, VWAL…LFPF, and WLAG…SLLL.

This sequence belongs to the cation transport ATPase (P-type) (TC 3.A.3) family. Type IB subfamily. Highly expressed in roots. Expressed in vascular tissues of the stele, mainly in pericycle cells.

The protein resides in the vacuole membrane. It carries out the reaction Cu(+)(in) + ATP + H2O = Cu(+)(out) + ADP + phosphate + H(+). Its function is as follows. Copper (Cu) transporter that mediates Cu transport in root vacuoles. Involved in Cu detoxification by sequestrating Cu into root vacuoles and limiting translocation of Cu from the roots to the shoots, and accumulation in grains. This chain is Copper-transporting ATPase HMA4, found in Oryza sativa subsp. japonica (Rice).